The following is a 319-amino-acid chain: Protease HtpX homolog (319 aa).

2 helical membrane passes run 6–26 and 28–48; these read TAML…VIGG and GGMM…YWNS. Position 130 (His-130) interacts with Zn(2+). The active site involves Glu-131. A Zn(2+)-binding site is contributed by His-134. 2 helical membrane-spanning segments follow: residues 145-165 and 172-192; these read LTAT…FFGG and PLGF…AMLV. Glu-201 serves as a coordination point for Zn(2+). Positions 277–319 are disordered; the sequence is MARETSTGSTAPVRPDNAGRKSRSVPRTGWGRGGSEPPKGPWS.

The protein belongs to the peptidase M48B family. The cofactor is Zn(2+).

Its subcellular location is the cell inner membrane. This is Protease HtpX homolog from Rhizobium meliloti (strain 1021) (Ensifer meliloti).